The sequence spans 275 residues: NH(3)-dependent NAD(+) synthetase (275 aa).

An ATP-binding site is contributed by 46-53 (GISGGQDS). Aspartate 52 contributes to the Mg(2+) binding site. Position 140 (arginine 140) interacts with deamido-NAD(+). ATP is bound at residue threonine 160. Position 165 (glutamate 165) interacts with Mg(2+). Lysine 173 and aspartate 180 together coordinate deamido-NAD(+). Positions 189 and 211 each coordinate ATP. 260 to 261 (HK) contacts deamido-NAD(+).

This sequence belongs to the NAD synthetase family. As to quaternary structure, homodimer.

The catalysed reaction is deamido-NAD(+) + NH4(+) + ATP = AMP + diphosphate + NAD(+) + H(+). It participates in cofactor biosynthesis; NAD(+) biosynthesis; NAD(+) from deamido-NAD(+) (ammonia route): step 1/1. Its function is as follows. Catalyzes the ATP-dependent amidation of deamido-NAD to form NAD. Uses ammonia as a nitrogen source. In Salmonella choleraesuis (strain SC-B67), this protein is NH(3)-dependent NAD(+) synthetase.